The following is a 1351-amino-acid chain: MKELYSLFMKPKDPLHFNAVKIMISSPERIREWSYGEVKKPETINYRTFKPERDGLFCARIFGPIKDYECNCGKYKRMKHRGVVCEKCGVEVIQSKVRRERMGHIELASPVAHIWFLRSLPSKIGNLLDLTLRELEKVLYFDSYIVLDPGDTPLTKGELLTEEKYRQMVQEHGSGFVAGIGAESIKQLLAGLDLEKLAVELREEMSKTNSMAKRKKLAKRLKIIDAFRESENRPEWMIMDVIPVLPPDLRPLVPLDGGRFATSDLNDLYRRVINRNNRLKRLQELNAPDIIIRNEKRMLQEAVDVLFDNGRRGKTITGASKRPLKSLSDMLKGKQGRFRQNLLGKRVDYSGRTVIVIGPNLRLHQCGLPKKMALELFKPFIYNKLEEKGYVTTIKAAKKMVERETPEVWDTLDEVVREFPVMLNRAPTLHRLGIQAFEPILIEGKAIQLHPLVCTAFNADFDGDQMAVHVPLSIEAQAEARILMMSTNNILSPAHGDPIIVPSQDIVLGIYYMTREKPFAKGEDRVFSSREEVRCAFDAGEADLHARVHVRMGDERVKTTVGRVLLSEILPEEMPFSAVNRVMNKKVLAGLIDMCYRTAGIKATVLLADRLKDLGYEYATRSGLSISIKDMTIPHRKSEILDQAFDLVKEIERQYNEGLITEGEKYNKAVDIWAKATEDVAAEMMKEIATTEVGGPEGEARVVEAFNPIFMMADSGARGSKDQMRQLAGMRGLMAKPSGEIIETPITANFREGLTVLQYFISTHGARKGLADTALKTANSGYLTRRLVDVSQDVIISEPDCGTMDGIEVEALLEAGEIIQRLGDRILGRIAQEDILDPVTAEVLVPMGTEIDEQRVQLIEDAGIEKVNIRSALTCRSLRGVCTMCYGRDLAQGKLAQIGEAIGIIAAQSIGEPGTQLTMRTFHIGGTASKSIERTSINNRYAGTVRFLNLNTVHNRDGDLIAMNRNGEISIISESGRERERYVIIYGAKLKVTDGQPVEPDTLLAEWDPFTTPILTEVAGAAKFGDIVEGQTMQEKLDPVTGKSSKVVVEYRESDVRPRISIKDDKGKTARVGEGGFARYFMPVGAILMVNEGDAIFPGDVLARIPRETTKTKDITGGLPRVAELFEVRKPKEHAVITEIDGVIGFGKDTKGKRKVIVSPEVGDARDYLIPKGKHISVHEGDYVRAGEPLMDGSPNPHDILTVLGEKEVAKYLVDEVQQVYRLQGVKINDKHIEVIVRQMLKRVRITDPGDSEFLMGEHVEKPIFEEINSKLTEEDKRPAAAEPLLLGITKASLSTQSFISAASFQETTKVLTDAATAGKVDYLLGLKENVIMGRLIPAGSGLRTYREVRK.

4 residues coordinate Zn(2+): C70, C72, C85, and C88. Positions 460, 462, and 464 each coordinate Mg(2+). Positions 801, 875, 882, and 885 each coordinate Zn(2+).

It belongs to the RNA polymerase beta' chain family. As to quaternary structure, the RNAP catalytic core consists of 2 alpha, 1 beta, 1 beta' and 1 omega subunit. When a sigma factor is associated with the core the holoenzyme is formed, which can initiate transcription. The cofactor is Mg(2+). Zn(2+) is required as a cofactor.

The catalysed reaction is RNA(n) + a ribonucleoside 5'-triphosphate = RNA(n+1) + diphosphate. Functionally, DNA-dependent RNA polymerase catalyzes the transcription of DNA into RNA using the four ribonucleoside triphosphates as substrates. The chain is DNA-directed RNA polymerase subunit beta' from Syntrophobacter fumaroxidans (strain DSM 10017 / MPOB).